A 394-amino-acid chain; its full sequence is Probable peptidoglycan glycosyltransferase FtsW (394 aa).

Over 1-27 the chain is Cytoplasmic; the sequence is MSALRSVAGLLQRWLLPARPAGLYDRQ. A helical membrane pass occupies residues 28 to 48; the sequence is LVVLALALMAVGLVIVASASI. The Periplasmic segment spans residues 49–64; sequence PEGIAINNDPFMFVKR. Residues 65 to 85 traverse the membrane as a helical segment; that stretch reads HGLFLVMALGISWFVLQVPMA. Topologically, residues 86 to 88 are cytoplasmic; that stretch reads RWQ. Residues 89 to 109 form a helical membrane-spanning segment; sequence HYNGPMLVLAILMLVLVLLVG. Topologically, residues 110–123 are periplasmic; it reads RSVNGSIRWLPLGP. A helical membrane pass occupies residues 124–144; it reads FNLQPAEFGKLALFVYLAGYL. Residues 145-154 lie on the Cytoplasmic side of the membrane; the sequence is VRRQSEVRER. Residues 155 to 175 form a helical membrane-spanning segment; that stretch reads FIGFMKPMAVLFVVAILLLAQ. A topological domain (periplasmic) is located at residue P176. A helical transmembrane segment spans residues 177 to 197; it reads DLGSVVVMFVTSLGMLFLAGA. Residue R198 is a topological domain, cytoplasmic. Residues 199–219 form a helical membrane-spanning segment; it reads LGQFIGLILVGVSAVVTLVIA. The Periplasmic portion of the chain corresponds to 220–279; it reads EPYRMRRVTSFLDPWADPFGSGYQLTQSLMAFGRGSWFGEGLGNSIQKMEYLPEAHTDFV. Residues 280–300 form a helical membrane-spanning segment; it reads FAILGEELGYAGVLGALFLIF. Residues 301 to 322 are Cytoplasmic-facing; that stretch reads ALSFKALKLGHQALVAERLYEG. A helical membrane pass occupies residues 323 to 343; it reads YLAIGIGIWFSFQTFVNVGAA. The Periplasmic segment spans residues 344–354; the sequence is SGMMPTKGLTL. The chain crosses the membrane as a helical span at residues 355–375; that stretch reads PLVSYGGSSLIIMMVAVSMLV. The Cytoplasmic segment spans residues 376 to 394; that stretch reads RIDFELRQASAQARVREVS.

It belongs to the SEDS family. FtsW subfamily.

The protein localises to the cell inner membrane. The catalysed reaction is [GlcNAc-(1-&gt;4)-Mur2Ac(oyl-L-Ala-gamma-D-Glu-L-Lys-D-Ala-D-Ala)](n)-di-trans,octa-cis-undecaprenyl diphosphate + beta-D-GlcNAc-(1-&gt;4)-Mur2Ac(oyl-L-Ala-gamma-D-Glu-L-Lys-D-Ala-D-Ala)-di-trans,octa-cis-undecaprenyl diphosphate = [GlcNAc-(1-&gt;4)-Mur2Ac(oyl-L-Ala-gamma-D-Glu-L-Lys-D-Ala-D-Ala)](n+1)-di-trans,octa-cis-undecaprenyl diphosphate + di-trans,octa-cis-undecaprenyl diphosphate + H(+). It participates in cell wall biogenesis; peptidoglycan biosynthesis. Functionally, peptidoglycan polymerase that is essential for cell division. The protein is Probable peptidoglycan glycosyltransferase FtsW of Aeromonas salmonicida (strain A449).